The following is a 320-amino-acid chain: Acetyl-coenzyme A carboxylase carboxyl transferase subunit alpha (320 aa).

Residues 33 to 294 (AFESEIQALR…GDAVEDELKA (262 aa)) enclose the CoA carboxyltransferase C-terminal domain.

It belongs to the AccA family. In terms of assembly, acetyl-CoA carboxylase is a heterohexamer composed of biotin carboxyl carrier protein (AccB), biotin carboxylase (AccC) and two subunits each of ACCase subunit alpha (AccA) and ACCase subunit beta (AccD).

Its subcellular location is the cytoplasm. It catalyses the reaction N(6)-carboxybiotinyl-L-lysyl-[protein] + acetyl-CoA = N(6)-biotinyl-L-lysyl-[protein] + malonyl-CoA. Its pathway is lipid metabolism; malonyl-CoA biosynthesis; malonyl-CoA from acetyl-CoA: step 1/1. Component of the acetyl coenzyme A carboxylase (ACC) complex. First, biotin carboxylase catalyzes the carboxylation of biotin on its carrier protein (BCCP) and then the CO(2) group is transferred by the carboxyltransferase to acetyl-CoA to form malonyl-CoA. In Caulobacter sp. (strain K31), this protein is Acetyl-coenzyme A carboxylase carboxyl transferase subunit alpha.